A 230-amino-acid chain; its full sequence is Sugar fermentation stimulation protein homolog (230 aa).

It belongs to the SfsA family.

In Pelobacter propionicus (strain DSM 2379 / NBRC 103807 / OttBd1), this protein is Sugar fermentation stimulation protein homolog.